Reading from the N-terminus, the 360-residue chain is Histidinol-phosphate aminotransferase (360 aa).

Lys222 bears the N6-(pyridoxal phosphate)lysine mark.

The protein belongs to the class-II pyridoxal-phosphate-dependent aminotransferase family. Histidinol-phosphate aminotransferase subfamily. Homodimer. Pyridoxal 5'-phosphate serves as cofactor.

The enzyme catalyses L-histidinol phosphate + 2-oxoglutarate = 3-(imidazol-4-yl)-2-oxopropyl phosphate + L-glutamate. It participates in amino-acid biosynthesis; L-histidine biosynthesis; L-histidine from 5-phospho-alpha-D-ribose 1-diphosphate: step 7/9. The protein is Histidinol-phosphate aminotransferase of Listeria innocua serovar 6a (strain ATCC BAA-680 / CLIP 11262).